Reading from the N-terminus, the 388-residue chain is Chorismate synthase (388 aa).

Arg39 and Arg45 together coordinate NADP(+). Residues 130 to 132 (RSS), 251 to 252 (NA), Gly296, 311 to 315 (KPIPT), and Arg337 contribute to the FMN site.

Belongs to the chorismate synthase family. In terms of assembly, homotetramer. FMNH2 serves as cofactor.

The enzyme catalyses 5-O-(1-carboxyvinyl)-3-phosphoshikimate = chorismate + phosphate. Its pathway is metabolic intermediate biosynthesis; chorismate biosynthesis; chorismate from D-erythrose 4-phosphate and phosphoenolpyruvate: step 7/7. Catalyzes the anti-1,4-elimination of the C-3 phosphate and the C-6 proR hydrogen from 5-enolpyruvylshikimate-3-phosphate (EPSP) to yield chorismate, which is the branch point compound that serves as the starting substrate for the three terminal pathways of aromatic amino acid biosynthesis. This reaction introduces a second double bond into the aromatic ring system. The polypeptide is Chorismate synthase (Streptococcus pneumoniae serotype 2 (strain D39 / NCTC 7466)).